The primary structure comprises 461 residues: Argininosuccinate lyase (461 aa).

Belongs to the lyase 1 family. Argininosuccinate lyase subfamily.

Its subcellular location is the cytoplasm. It carries out the reaction 2-(N(omega)-L-arginino)succinate = fumarate + L-arginine. Its pathway is amino-acid biosynthesis; L-arginine biosynthesis; L-arginine from L-ornithine and carbamoyl phosphate: step 3/3. The sequence is that of Argininosuccinate lyase from Trichormus variabilis (strain ATCC 29413 / PCC 7937) (Anabaena variabilis).